Consider the following 790-residue polypeptide: F-box and leucine-rich repeat protein 13 (790 aa).

An F-box domain is found at 237–283 (AFDISVLPEQAILQIFLYLTFKDMMACSRVNRSWMAMIQRGSLWNSI). 6 LRR repeats span residues 503–525 (QLTV…HFFD), 531–552 (RLRE…IRLS), 557–579 (NLHY…YIAS), 582–602 (SLIS…TILS), 606–628 (KLRE…AYCK), and 632–657 (LLEH…IFCT).

Belongs to the DRC6 family. Component of the nexin-dynein regulatory complex (N-DRC). Directly interacts with SKP1 and CUL1. Interacts with TCTE1/DRC5.

It is found in the cytoplasm. The protein resides in the cytoskeleton. The protein localises to the flagellum axoneme. Its subcellular location is the microtubule organizing center. It localises to the centrosome. Its function is as follows. Substrate-recognition component of the SCF (SKP1-CUL1-F-box protein)-type E3 ubiquitin ligase complex. Component of the nexin-dynein regulatory complex (N-DRC), a key regulator of ciliary/flagellar motility which maintains the alignment and integrity of the distal axoneme and regulates microtubule sliding in motile axonemes. Specifically targets CEP192 isoform 3 for ubiquitin-mediated proteolysis and thereby acts as a regulator of microtubule nucleation activity. In Mus musculus (Mouse), this protein is F-box and leucine-rich repeat protein 13 (Fbxl13).